Here is a 415-residue protein sequence, read N- to C-terminus: Light-independent protochlorophyllide reductase subunit N (415 aa).

[4Fe-4S] cluster is bound by residues Cys-16, Cys-41, and Cys-98.

It belongs to the BchN/ChlN family. Protochlorophyllide reductase is composed of three subunits; BchL, BchN and BchB. Forms a heterotetramer of two BchB and two BchN subunits. It depends on [4Fe-4S] cluster as a cofactor.

It carries out the reaction chlorophyllide a + oxidized 2[4Fe-4S]-[ferredoxin] + 2 ADP + 2 phosphate = protochlorophyllide a + reduced 2[4Fe-4S]-[ferredoxin] + 2 ATP + 2 H2O. The protein operates within porphyrin-containing compound metabolism; bacteriochlorophyll biosynthesis (light-independent). Component of the dark-operative protochlorophyllide reductase (DPOR) that uses Mg-ATP and reduced ferredoxin to reduce ring D of protochlorophyllide (Pchlide) to form chlorophyllide a (Chlide). This reaction is light-independent. The NB-protein (BchN-BchB) is the catalytic component of the complex. This is Light-independent protochlorophyllide reductase subunit N from Roseiflexus sp. (strain RS-1).